Here is a 76-residue protein sequence, read N- to C-terminus: IHATAHAVCVVLAAFGYWVAAPISLAFTTSGGVLGALYLRKRATGASRLAATHISRWLIVSVYVAAGLCYATIITH.

2 helical membrane-spanning segments follow: residues 7-27 (AVCV…SLAF) and 54-74 (ISRW…ATII).

It belongs to the alphaherpesvirinae HHV-1 UL43 family.

The protein localises to the membrane. The sequence is that of Membrane protein UL43 homolog from Equus caballus (Horse).